The sequence spans 322 residues: Ferrochelatase (322 aa).

Residues His-193 and Glu-274 each contribute to the Fe cation site.

This sequence belongs to the ferrochelatase family.

It is found in the cytoplasm. The enzyme catalyses heme b + 2 H(+) = protoporphyrin IX + Fe(2+). The protein operates within porphyrin-containing compound metabolism; protoheme biosynthesis; protoheme from protoporphyrin-IX: step 1/1. Catalyzes the ferrous insertion into protoporphyrin IX. In Photobacterium profundum (strain SS9), this protein is Ferrochelatase.